A 208-amino-acid polypeptide reads, in one-letter code: Uridine kinase (208 aa).

An ATP-binding site is contributed by 12-19 (GGSGGGKT).

It belongs to the uridine kinase family.

It is found in the cytoplasm. It carries out the reaction uridine + ATP = UMP + ADP + H(+). It catalyses the reaction cytidine + ATP = CMP + ADP + H(+). It functions in the pathway pyrimidine metabolism; CTP biosynthesis via salvage pathway; CTP from cytidine: step 1/3. The protein operates within pyrimidine metabolism; UMP biosynthesis via salvage pathway; UMP from uridine: step 1/1. The protein is Uridine kinase of Streptococcus equi subsp. equi (strain 4047).